Here is a 380-residue protein sequence, read N- to C-terminus: uncharacterized protein (380 aa).

The 259-residue stretch at 111-369 (APYSMERHHD…DCLAILAEMI (259 aa)) folds into the Peptidase M14 domain. Zn(2+)-binding residues include His-164, Glu-167, and His-257. The Proton donor/acceptor role is filled by Glu-333.

Zn(2+) serves as cofactor.

This is an uncharacterized protein from Zymomonas mobilis subsp. mobilis (strain ATCC 31821 / ZM4 / CP4).